A 190-amino-acid polypeptide reads, in one-letter code: Adenine phosphoribosyltransferase (190 aa).

The protein belongs to the purine/pyrimidine phosphoribosyltransferase family. As to quaternary structure, homodimer.

It is found in the cytoplasm. The catalysed reaction is AMP + diphosphate = 5-phospho-alpha-D-ribose 1-diphosphate + adenine. Its pathway is purine metabolism; AMP biosynthesis via salvage pathway; AMP from adenine: step 1/1. Catalyzes a salvage reaction resulting in the formation of AMP, that is energically less costly than de novo synthesis. In Cupriavidus metallidurans (strain ATCC 43123 / DSM 2839 / NBRC 102507 / CH34) (Ralstonia metallidurans), this protein is Adenine phosphoribosyltransferase.